Reading from the N-terminus, the 736-residue chain is DNA ligase (736 aa).

Residues Asp41–Asp45, Ser91–Leu92, and Glu125 contribute to the NAD(+) site. The active-site N6-AMP-lysine intermediate is the Lys127. Arg148 contacts NAD(+). The segment at Glu170–Asn205 is disordered. 3 residues coordinate NAD(+): Glu215, Lys347, and Lys371. Residues Cys463, Cys466, Cys481, and Cys487 each contribute to the Zn(2+) site. The BRCT domain occupies Thr656 to Gly736.

It belongs to the NAD-dependent DNA ligase family. LigA subfamily. Requires Mg(2+) as cofactor. Mn(2+) serves as cofactor.

It carries out the reaction NAD(+) + (deoxyribonucleotide)n-3'-hydroxyl + 5'-phospho-(deoxyribonucleotide)m = (deoxyribonucleotide)n+m + AMP + beta-nicotinamide D-nucleotide.. DNA ligase that catalyzes the formation of phosphodiester linkages between 5'-phosphoryl and 3'-hydroxyl groups in double-stranded DNA using NAD as a coenzyme and as the energy source for the reaction. It is essential for DNA replication and repair of damaged DNA. The protein is DNA ligase of Erythrobacter litoralis (strain HTCC2594).